Consider the following 136-residue polypeptide: Signal recognition particle 14 kDa protein (136 aa).

Tyr27 carries the phosphotyrosine modification.

Belongs to the SRP14 family. As to quaternary structure, heterodimer with SRP9; binds RNA as heterodimer. Component of a signal recognition particle (SRP) complex that consists of a 7SL RNA molecule of 300 nucleotides and six protein subunits: SRP72, SRP68, SRP54, SRP19, SRP14 and SRP9.

The protein localises to the cytoplasm. Its function is as follows. Component of the signal recognition particle (SRP) complex, a ribonucleoprotein complex that mediates the cotranslational targeting of secretory and membrane proteins to the endoplasmic reticulum (ER). SRP9 together with SRP14 and the Alu portion of the SRP RNA, constitutes the elongation arrest domain of SRP. The complex of SRP9 and SRP14 is required for SRP RNA binding. The sequence is that of Signal recognition particle 14 kDa protein (SRP14) from Pongo abelii (Sumatran orangutan).